The sequence spans 196 residues: ATP-dependent Clp protease proteolytic subunit (196 aa).

Catalysis depends on Ser96, which acts as the Nucleophile. Residue His121 is part of the active site.

The protein belongs to the peptidase S14 family. Fourteen ClpP subunits assemble into 2 heptameric rings which stack back to back to give a disk-like structure with a central cavity, resembling the structure of eukaryotic proteasomes.

The protein localises to the cytoplasm. The enzyme catalyses Hydrolysis of proteins to small peptides in the presence of ATP and magnesium. alpha-casein is the usual test substrate. In the absence of ATP, only oligopeptides shorter than five residues are hydrolyzed (such as succinyl-Leu-Tyr-|-NHMec, and Leu-Tyr-Leu-|-Tyr-Trp, in which cleavage of the -Tyr-|-Leu- and -Tyr-|-Trp bonds also occurs).. Functionally, cleaves peptides in various proteins in a process that requires ATP hydrolysis. Has a chymotrypsin-like activity. Plays a major role in the degradation of misfolded proteins. The chain is ATP-dependent Clp protease proteolytic subunit from Streptococcus uberis (strain ATCC BAA-854 / 0140J).